Consider the following 239-residue polypeptide: Insulin-like growth factor-binding protein 3 receptor (239 aa).

The N-terminal stretch at 1-38 is a signal peptide; the sequence is MGSCQAGHYLHFCLAHHPPLVCATLILLLLGLSGLGLG. Over 39-205 the chain is Extracellular; the sequence is GFLLTHRTDL…EELTLCGSRL (167 aa). N-linked (GlcNAc...) asparagine glycosylation is found at Asn-101 and Asn-167. A helical membrane pass occupies residues 206–226; the sequence is LVLGFFLILFCGLCCLTAACF. Topologically, residues 227–239 are cytoplasmic; it reads HPRRESHWSRTRL.

Interacts with IGFBP3. Interacts with CASP8.

The protein resides in the cell membrane. Functionally, cell death receptor specific for IGFBP3, may mediate caspase-8-dependent apoptosis upon ligand binding. This chain is Insulin-like growth factor-binding protein 3 receptor (TMEM219), found in Bos taurus (Bovine).